A 156-amino-acid polypeptide reads, in one-letter code: Phosphopantetheine adenylyltransferase (156 aa).

S9 serves as a coordination point for substrate. ATP-binding positions include 9-10 and H17; that span reads SF. Substrate-binding residues include K41, I74, and K88. ATP contacts are provided by residues 89–91, E99, and 123–129; these read GLR and LLHVSSS.

Belongs to the bacterial CoaD family. In terms of assembly, homohexamer. The cofactor is Mg(2+).

It is found in the cytoplasm. It carries out the reaction (R)-4'-phosphopantetheine + ATP + H(+) = 3'-dephospho-CoA + diphosphate. It functions in the pathway cofactor biosynthesis; coenzyme A biosynthesis; CoA from (R)-pantothenate: step 4/5. Reversibly transfers an adenylyl group from ATP to 4'-phosphopantetheine, yielding dephospho-CoA (dPCoA) and pyrophosphate. In Kocuria rhizophila (strain ATCC 9341 / DSM 348 / NBRC 103217 / DC2201), this protein is Phosphopantetheine adenylyltransferase.